Consider the following 578-residue polypeptide: Arginine--tRNA ligase (578 aa).

The short motif at proline 127 to histidine 137 is the 'HIGH' region element.

Belongs to the class-I aminoacyl-tRNA synthetase family. As to quaternary structure, monomer.

The protein resides in the cytoplasm. The enzyme catalyses tRNA(Arg) + L-arginine + ATP = L-arginyl-tRNA(Arg) + AMP + diphosphate. This is Arginine--tRNA ligase from Pseudomonas fluorescens (strain ATCC BAA-477 / NRRL B-23932 / Pf-5).